The primary structure comprises 531 residues: Peptide chain release factor 3 (531 aa).

Residues 13-282 (AKRRTFAIIS…TLIEHAPPPK (270 aa)) form the tr-type G domain. Residues 22 to 29 (SHPDAGKT), 90 to 94 (DTPGH), and 144 to 147 (NKLD) each bind GTP.

The protein belongs to the TRAFAC class translation factor GTPase superfamily. Classic translation factor GTPase family. PrfC subfamily.

It localises to the cytoplasm. Its function is as follows. Increases the formation of ribosomal termination complexes and stimulates activities of RF-1 and RF-2. It binds guanine nucleotides and has strong preference for UGA stop codons. It may interact directly with the ribosome. The stimulation of RF-1 and RF-2 is significantly reduced by GTP and GDP, but not by GMP. The polypeptide is Peptide chain release factor 3 (Psychrobacter sp. (strain PRwf-1)).